Consider the following 445-residue polypeptide: Reticulon-4 receptor-like 1 (445 aa).

The signal sequence occupies residues 1–24 (MLRKGCCVELLLLLLAGELPLSGG). In terms of domain architecture, LRRNT spans 25–54 (CPRDCVCYPSPMTVSCQAHNFAAIPEGIPE). LRR repeat units follow at residues 55-76 (DSER…HFSP), 77-98 (AMVT…TFEG), 101-123 (HLEE…TFQG), 126-147 (KLHA…IFGG), 150-171 (SLQY…IFVD), 174-195 (NLSH…IFRG), 198-219 (NLDR…AFHD), and 222-243 (RLTT…CLAP). The LRRCT domain maps to 255 to 306 (NAWDCGCRARSLWEWLRRFRGSSSVVPCATPELRQGQDLKSLRVEDFRNCTG). 2 disordered regions span residues 304–380 (CTGP…ELPE) and 401–421 (RPKR…SGVQ). Composition is skewed to basic residues over residues 352–366 (GSKK…HRNR) and 401–413 (RPKR…RRTP). The GPI-anchor amidated serine moiety is linked to residue Ser-424. Residues 424–444 (SSGTALGVSLLAWILGLVVSL) form a helical membrane-spanning segment. Positions 425 to 445 (SGTALGVSLLAWILGLVVSLR) are cleaved as a propeptide — removed in mature form.

The protein belongs to the Nogo receptor family. As to quaternary structure, identified in a complex that contains RTN4R, RTN4RL1 and NGFR; the interaction depends on the presence of chondroitin sulfate proteoglycans. Does not interact with MAG, OMG and RTN4. Detected in brain (at protein level). Expressed in various regions of the brain, including the cerebral cortex, hippocampus, striatum, thalamus and cerebellum.

It localises to the cell membrane. Its subcellular location is the membrane raft. It is found in the perikaryon. The protein resides in the cell projection. Cell surface receptor. Plays a functionally redundant role in postnatal brain development and in regulating axon regeneration in the adult central nervous system. Contributes to normal axon migration across the brain midline and normal formation of the corpus callosum. Protects motoneurons against apoptosis; protection against apoptosis is probably mediated by MAG. Plays a role in inhibiting neurite outgrowth and axon regeneration via its binding to neuronal chondroitin sulfate proteoglycans. Binds heparin. Like other family members, plays a role in restricting the number dendritic spines and the number of synapses that are formed during brain development. Signaling mediates activation of Rho and downstream reorganization of the actin cytoskeleton. The sequence is that of Reticulon-4 receptor-like 1 from Rattus norvegicus (Rat).